A 258-amino-acid chain; its full sequence is Ribosomal RNA small subunit methyltransferase J (258 aa).

S-adenosyl-L-methionine contacts are provided by residues 111–112 (RD), 127–128 (ER), and aspartate 179.

It belongs to the methyltransferase superfamily. RsmJ family.

It localises to the cytoplasm. The enzyme catalyses guanosine(1516) in 16S rRNA + S-adenosyl-L-methionine = N(2)-methylguanosine(1516) in 16S rRNA + S-adenosyl-L-homocysteine + H(+). In terms of biological role, specifically methylates the guanosine in position 1516 of 16S rRNA. The protein is Ribosomal RNA small subunit methyltransferase J of Alteromonas mediterranea (strain DSM 17117 / CIP 110805 / LMG 28347 / Deep ecotype).